The sequence spans 126 residues: C-type natriuretic peptide (126 aa).

The first 23 residues, 1–23, serve as a signal peptide directing secretion; the sequence is MHLSQLIACALLLALLSLRPSEA. Positions 19 to 71 are disordered; the sequence is RPSEAKPGTPPKVPRTPPGEELAEPQAAGGNQKKGDKTPGGGGANLKGDRSRL. A propeptide spanning residues 24-73 is cleaved from the precursor; that stretch reads KPGTPPKVPRTPPGEELAEPQAAGGNQKKGDKTPGGGGANLKGDRSRLLR. Over residues 26–35 the composition is skewed to pro residues; the sequence is GTPPKVPRTP. Residues C110 and C126 are joined by a disulfide bond.

The protein belongs to the natriuretic peptide family. Degraded by IDE (in vitro). In terms of tissue distribution, expressed exclusively in brain.

The protein resides in the secreted. In terms of biological role, hormone which plays a role in endochondral ossification through regulation of cartilaginous growth plate chondrocytes proliferation and differentiation. May also be vasoactive and natriuretic. Acts by specifically binding and stimulating NPR2 to produce cGMP. Binds the clearance receptor NPR3. This Rattus norvegicus (Rat) protein is C-type natriuretic peptide (Nppc).